The sequence spans 314 residues: Probable manganese-dependent inorganic pyrophosphatase (314 aa).

Positions 10, 14, 16, 80, 102, and 154 each coordinate Mn(2+).

Belongs to the PPase class C family. Mn(2+) is required as a cofactor.

The protein resides in the cytoplasm. It catalyses the reaction diphosphate + H2O = 2 phosphate + H(+). This is Probable manganese-dependent inorganic pyrophosphatase (ppaC) from Lactococcus lactis subsp. lactis (strain IL1403) (Streptococcus lactis).